The primary structure comprises 75 residues: Putative UPF0377 protein YJL222W-A (75 aa).

It belongs to the UPF0377 family.

This chain is Putative UPF0377 protein YJL222W-A, found in Saccharomyces cerevisiae (strain ATCC 204508 / S288c) (Baker's yeast).